We begin with the raw amino-acid sequence, 172 residues long: Shikimate kinase (172 aa).

Residue 14 to 19 (GAGKST) coordinates ATP. Ser-18 lines the Mg(2+) pocket. The substrate site is built by Asp-36, Arg-60, and Gly-82. Arg-120 is a binding site for ATP. A substrate-binding site is contributed by Arg-140.

This sequence belongs to the shikimate kinase family. As to quaternary structure, monomer. It depends on Mg(2+) as a cofactor.

The protein resides in the cytoplasm. It catalyses the reaction shikimate + ATP = 3-phosphoshikimate + ADP + H(+). It functions in the pathway metabolic intermediate biosynthesis; chorismate biosynthesis; chorismate from D-erythrose 4-phosphate and phosphoenolpyruvate: step 5/7. In terms of biological role, catalyzes the specific phosphorylation of the 3-hydroxyl group of shikimic acid using ATP as a cosubstrate. The polypeptide is Shikimate kinase (Tolumonas auensis (strain DSM 9187 / NBRC 110442 / TA 4)).